A 320-amino-acid polypeptide reads, in one-letter code: GTP 3',8-cyclase (320 aa).

The Radical SAM core domain occupies 5 to 225 (QFGRKINYLR…IQLIKKDEKA (221 aa)). Arg-14 lines the GTP pocket. Positions 21 and 25 each coordinate [4Fe-4S] cluster. Residue Tyr-27 participates in S-adenosyl-L-methionine binding. [4Fe-4S] cluster is bound at residue Cys-28. Arg-64 serves as a coordination point for GTP. S-adenosyl-L-methionine is bound at residue Gly-68. Thr-95 is a GTP binding site. Ser-119 contributes to the S-adenosyl-L-methionine binding site. GTP is bound at residue Lys-155. Met-189 lines the S-adenosyl-L-methionine pocket. [4Fe-4S] cluster is bound by residues Cys-248 and Cys-251. A GTP-binding site is contributed by 253-255 (RIR). Cys-265 serves as a coordination point for [4Fe-4S] cluster.

This sequence belongs to the radical SAM superfamily. MoaA family. As to quaternary structure, monomer and homodimer. The cofactor is [4Fe-4S] cluster.

The catalysed reaction is GTP + AH2 + S-adenosyl-L-methionine = (8S)-3',8-cyclo-7,8-dihydroguanosine 5'-triphosphate + 5'-deoxyadenosine + L-methionine + A + H(+). Its pathway is cofactor biosynthesis; molybdopterin biosynthesis. In terms of biological role, catalyzes the cyclization of GTP to (8S)-3',8-cyclo-7,8-dihydroguanosine 5'-triphosphate. The chain is GTP 3',8-cyclase from Campylobacter jejuni (strain RM1221).